The sequence spans 477 residues: Ankyrin repeat, SAM and basic leucine zipper domain-containing protein 1 (477 aa).

Phosphoserine is present on residues S17, S18, and S20. 6 ANK repeats span residues 46-76 (EKKE…SVDA), 80-109 (YGWT…NASF), 112-146 (DKQT…DPNV), 150-179 (RLMT…EVNT), 183-212 (NGYT…NKML), and 216-245 (DGKL…PLEG). Residues 274 to 336 (SYAAFGDLEV…KILTALKELE (63 aa)) enclose the SAM domain.

As to quaternary structure, interacts with DDX4, PIWIL1, RANBP9 and TDRD1.

It is found in the cytoplasm. Functionally, plays a central role during spermatogenesis by repressing transposable elements and preventing their mobilization, which is essential for the germline integrity. Acts via the piRNA metabolic process, which mediates the repression of transposable elements during meiosis by forming complexes composed of piRNAs and Piwi proteins and governs the methylation and subsequent repression of transposons. Its association with pi-bodies suggests a participation in the primary piRNAs metabolic process. Required prior to the pachytene stage to facilitate the production of multiple types of piRNAs, including those associated with repeats involved in the regulation of retrotransposons. May act by mediating protein-protein interactions during germ cell maturation. This is Ankyrin repeat, SAM and basic leucine zipper domain-containing protein 1 (ASZ1) from Ateles geoffroyi (Black-handed spider monkey).